A 188-amino-acid chain; its full sequence is Photosystem I assembly protein Ycf4 (188 aa).

2 consecutive transmembrane segments (helical) span residues 22–42 (LGWASVLLLGTSGFLLTGLSS) and 68–88 (LVMCFYGIAGLFLSTYLWCAI).

Belongs to the Ycf4 family.

The protein resides in the plastid. Its subcellular location is the chloroplast thylakoid membrane. Its function is as follows. Seems to be required for the assembly of the photosystem I complex. This is Photosystem I assembly protein Ycf4 from Zygnema circumcarinatum (Green alga).